The sequence spans 261 residues: MSDILDKIIAVKREEIAAALESAPLEELKVQASARDSRDFVGALRDKHAAGHAAVIAEVKKASPSKGVLREHFVPADIARSYAQHGAACLSVLTDERFFQGSARYLEQARAACALPVLRKDFIVDAYQVLEARAMGADAILLIAAALDTPLMIDLEAYAHSLGLAVLVEVHNRGELDEALKLKTPLVGINNRNLRTFETTIDTTLGMLDAIPDDRIVVTESGILSRADVERMEAAGVHTFLVGEAFMRAENPGAELARMFF.

It belongs to the TrpC family.

The catalysed reaction is 1-(2-carboxyphenylamino)-1-deoxy-D-ribulose 5-phosphate + H(+) = (1S,2R)-1-C-(indol-3-yl)glycerol 3-phosphate + CO2 + H2O. The protein operates within amino-acid biosynthesis; L-tryptophan biosynthesis; L-tryptophan from chorismate: step 4/5. This Burkholderia pseudomallei (strain 1106a) protein is Indole-3-glycerol phosphate synthase.